A 357-amino-acid chain; its full sequence is UDP-N-acetylglucosamine--N-acetylmuramyl-(pentapeptide) pyrophosphoryl-undecaprenol N-acetylglucosamine transferase (357 aa).

UDP-N-acetyl-alpha-D-glucosamine is bound by residues 13 to 15 (SAG), Arg166, Ser196, and Gln291.

This sequence belongs to the glycosyltransferase 28 family. MurG subfamily.

It localises to the cell membrane. The enzyme catalyses di-trans,octa-cis-undecaprenyl diphospho-N-acetyl-alpha-D-muramoyl-L-alanyl-D-glutamyl-meso-2,6-diaminopimeloyl-D-alanyl-D-alanine + UDP-N-acetyl-alpha-D-glucosamine = di-trans,octa-cis-undecaprenyl diphospho-[N-acetyl-alpha-D-glucosaminyl-(1-&gt;4)]-N-acetyl-alpha-D-muramoyl-L-alanyl-D-glutamyl-meso-2,6-diaminopimeloyl-D-alanyl-D-alanine + UDP + H(+). It functions in the pathway cell wall biogenesis; peptidoglycan biosynthesis. Its function is as follows. Cell wall formation. Catalyzes the transfer of a GlcNAc subunit on undecaprenyl-pyrophosphoryl-MurNAc-pentapeptide (lipid intermediate I) to form undecaprenyl-pyrophosphoryl-MurNAc-(pentapeptide)GlcNAc (lipid intermediate II). This chain is UDP-N-acetylglucosamine--N-acetylmuramyl-(pentapeptide) pyrophosphoryl-undecaprenol N-acetylglucosamine transferase, found in Clostridium perfringens (strain ATCC 13124 / DSM 756 / JCM 1290 / NCIMB 6125 / NCTC 8237 / Type A).